A 1019-amino-acid polypeptide reads, in one-letter code: Photoactivated adenylate cyclase subunit alpha (1019 aa).

Residues 55 to 148 form the BLUF 1 domain; that stretch reads LRRLMYLSAS…GRMYGEWHMK (94 aa). The region spanning 204 to 332 is the Guanylate cyclase 1 domain; sequence VVTFIYLVEF…DCINTASRIT (129 aa). A BLUF 2 domain is found at 467–559; it reads LITLTYISQA…RVYGSPLDMT (93 aa). The Guanylate cyclase 2 domain maps to 615 to 744; the sequence is VMLATDICSF…EVSARVMEVE (130 aa). The tract at residues 822–861 is disordered; that stretch reads GTNAPGRGAPAGGIPSSPKVRPPGRTNSVSSYTPDPNEAL. The segment covering 825–839 has biased composition (low complexity); that stretch reads APGRGAPAGGIPSSP. Polar residues predominate over residues 846–855; that stretch reads RTNSVSSYTP.

It belongs to the adenylyl cyclase class-4/guanylyl cyclase family. As to quaternary structure, heterotetramer of two alpha and two beta subunits. FAD serves as cofactor.

The protein localises to the cell projection. It localises to the cilium. Its subcellular location is the flagellum. The catalysed reaction is ATP = 3',5'-cyclic AMP + diphosphate. Its activity is regulated as follows. Activity increased by up to 80-fold under blue light. In terms of biological role, acts as a blue light photoreceptor for the step-up photophobic response. Mediates photoavoidance. This is Photoactivated adenylate cyclase subunit alpha from Euglena gracilis.